The chain runs to 544 residues: Methionine--tRNA ligase (544 aa).

The 'HIGH' region signature appears at 10 to 20 (PYANGSLHLGH). Residues Cys-141, Cys-144, Cys-153, and Cys-156 each contribute to the Zn(2+) site. A 'KMSKS' region motif is present at residues 329–333 (KLSTS). Thr-332 contacts ATP.

The protein belongs to the class-I aminoacyl-tRNA synthetase family. MetG type 1 subfamily. As to quaternary structure, monomer. Zn(2+) serves as cofactor.

It localises to the cytoplasm. The enzyme catalyses tRNA(Met) + L-methionine + ATP = L-methionyl-tRNA(Met) + AMP + diphosphate. Its function is as follows. Is required not only for elongation of protein synthesis but also for the initiation of all mRNA translation through initiator tRNA(fMet) aminoacylation. This Bacillus cereus (strain 03BB102) protein is Methionine--tRNA ligase.